Reading from the N-terminus, the 549-residue chain is E-selectin (549 aa).

The signal sequence occupies residues 1-21 (MNASCFLSALTFVLLIGKSIA). The C-type lectin domain maps to 22–139 (WYYNASSELM…CDKKKLALCY (118 aa)). Over 22 to 494 (WYYNASSELM…CEAPANPPRP (473 aa)) the chain is Extracellular. Residues Asn25 and Asn60 are each glycosylated (N-linked (GlcNAc...) asparagine). Intrachain disulfides connect Cys40/Cys138, Cys111/Cys130, Cys143/Cys154, Cys148/Cys163, Cys165/Cys174, Cys180/Cys225, Cys193/Cys206, Cys210/Cys238, Cys243/Cys287, Cys256/Cys269, Cys273/Cys300, Cys305/Cys350, Cys336/Cys363, Cys368/Cys413, Cys399/Cys426, Cys431/Cys472, and Cys458/Cys485. Glu101, Asn103, and Glu109 together coordinate Ca(2+). Residues 101–109 (EPNNKQRNE), 113–118 (EIYIQR), and 126–128 (NDE) contribute to the a carbohydrate site. Residues Asn126 and Asp127 each contribute to the Ca(2+) site. Residues 140 to 175 (TASCTNTSCSGHGECVETINSYTCKCHPGFLGPKCD) form the EGF-like domain. A glycan (N-linked (GlcNAc...) asparagine) is linked at Asn145. Sushi domains lie at 178-240 (VTCQ…ACHV), 241-302 (VECK…SCKA), 303-365 (VTCD…VCKA), 366-428 (SQCE…TCAG), and 429-487 (VQCS…TCEA). N-linked (GlcNAc...) asparagine glycosylation is found at Asn192 and Asn203. Asn266 carries N-linked (GlcNAc...) asparagine glycosylation. N-linked (GlcNAc...) asparagine glycosylation is found at Asn313, Asn320, and Asn333. N-linked (GlcNAc...) asparagine glycosylation is found at Asn441 and Asn465. The helical transmembrane segment at 495–516 (LVVALSVAATSLLTLSSLIYVL) threads the bilayer. Over 517–549 (KRFFWKKAKKFVPASSCQSLQSFENYQGPSYII) the chain is Cytoplasmic.

It belongs to the selectin/LECAM family. As to quaternary structure, interacts with SELPLG/PSGL1 and PODXL2 through the sialyl Lewis X epitope. SELPLG sulfation appears not to be required for this interaction.

Its subcellular location is the cell membrane. Cell-surface glycoprotein having a role in immunoadhesion. Mediates in the adhesion of blood neutrophils in cytokine-activated endothelium through interaction with SELPLG/PSGL1. May have a role in capillary morphogenesis. This Rattus norvegicus (Rat) protein is E-selectin (Sele).